The sequence spans 278 residues: 4-deoxy-L-threo-5-hexosulose-uronate ketol-isomerase (278 aa).

Zn(2+)-binding residues include His196, His198, Glu203, and His245.

It belongs to the KduI family. As to quaternary structure, homohexamer. Requires Zn(2+) as cofactor.

It catalyses the reaction 5-dehydro-4-deoxy-D-glucuronate = 3-deoxy-D-glycero-2,5-hexodiulosonate. It functions in the pathway glycan metabolism; pectin degradation; 2-dehydro-3-deoxy-D-gluconate from pectin: step 4/5. Functionally, catalyzes the isomerization of 5-dehydro-4-deoxy-D-glucuronate to 3-deoxy-D-glycero-2,5-hexodiulosonate. The sequence is that of 4-deoxy-L-threo-5-hexosulose-uronate ketol-isomerase from Escherichia coli O8 (strain IAI1).